A 373-amino-acid chain; its full sequence is Zinc finger protein CONSTANS-LIKE 10 (373 aa).

Residues Cys5, Cys8, Cys28, His33, Cys48, Cys51, Cys71, and His76 each contribute to the Zn(2+) site. The B box-type 1; atypical zinc-finger motif lies at 5–47 (CDFCGEQRSMVYCRSDAACLCLSCDRNVHSANALSKRHSRTLV). Residues 48–92 (CERCNAQPASVRCSDERVSLCQNCDWSGHDGKNSTTTSHHKRQTI) form a B box-type 2; atypical zinc finger. A disordered region spans residues 152–172 (PETSSAAQGMDHSSVPENSSM). The 43-residue stretch at 316-358 (RNNAVMRYKEKKKARKFDKRVRYVSRKERADVRRRVKGRFVKS) folds into the CCT domain.

Belongs to the CONSTANS family.

Its subcellular location is the nucleus. The chain is Zinc finger protein CONSTANS-LIKE 10 (COL10) from Arabidopsis thaliana (Mouse-ear cress).